Consider the following 379-residue polypeptide: CCN family member 1 (379 aa).

A signal peptide spans 1 to 24 (MSSSTIKTLAVAVTLLHLTRLALS). Residues 25–94 (TCPAACHCPL…TALKGICRAQ (70 aa)) enclose the IGFBP N-terminal domain. Intrachain disulfides connect cysteine 26–cysteine 50, cysteine 30–cysteine 52, cysteine 32–cysteine 53, cysteine 39–cysteine 56, cysteine 64–cysteine 78, and cysteine 70–cysteine 91. The VWFC domain maps to 98–164 (RPCEYNSRIY…GQCCEEWVCD (67 aa)). A Phosphoserine modification is found at serine 184. In terms of domain architecture, TSP type-1 spans 226–271 (KCIVQTTSWSQCSKSCGTGISTRVTNDNSECRLVKETRICEVRPCG). Residues 277-313 (SLKKGKKCSKTKKSPEPVRFTYAGCSSVKKYRPKYCG) form a heparin-binding region. Disulfide bonds link cysteine 284–cysteine 321, cysteine 301–cysteine 335, cysteine 312–cysteine 351, cysteine 315–cysteine 353, and cysteine 320–cysteine 357. The 75-residue stretch at 284-358 (CSKTKKSPEP…QSCKCNYNCP (75 aa)) folds into the CTCK domain.

This sequence belongs to the CCN family. As to quaternary structure, interaction with integrins is heparin- and cell-type-dependent and promotes cell adhesion.

The protein localises to the secreted. Its function is as follows. Promotes cell proliferation, chemotaxis, angiogenesis and cell adhesion. Appears to play a role in wound healing by up-regulating, in skin fibroblasts, the expression of a number of genes involved in angiogenesis, inflammation and matrix remodeling including VEGA-A, VEGA-C, MMP1, MMP3, TIMP1, uPA, PAI-1 and integrins alpha-3 and alpha-5. CCN1-mediated gene regulation is dependent on heparin-binding. Down-regulates the expression of alpha-1 and alpha-2 subunits of collagen type-1. Promotes cell adhesion and adhesive signaling through integrin alpha-6/beta-1, cell migration through integrin alpha-1/beta-5 and cell proliferation through integrin alpha-v/beta-3. This is CCN family member 1 from Rattus norvegicus (Rat).